A 154-amino-acid chain; its full sequence is 3-hydroxyacyl-[acyl-carrier-protein] dehydratase FabZ (154 aa).

The active site involves His-60.

Belongs to the thioester dehydratase family. FabZ subfamily.

The protein resides in the cytoplasm. It catalyses the reaction a (3R)-hydroxyacyl-[ACP] = a (2E)-enoyl-[ACP] + H2O. Its function is as follows. Involved in unsaturated fatty acids biosynthesis. Catalyzes the dehydration of short chain beta-hydroxyacyl-ACPs and long chain saturated and unsaturated beta-hydroxyacyl-ACPs. This Actinobacillus pleuropneumoniae serotype 5b (strain L20) protein is 3-hydroxyacyl-[acyl-carrier-protein] dehydratase FabZ.